Consider the following 291-residue polypeptide: Beta-lactamase CTX-M-4 (291 aa).

The first 28 residues, 1-28 (MMTQSIRRSMLTVMATLPLLFSSATLHA), serve as a signal peptide directing secretion. The active-site Acyl-ester intermediate is Ser-73. A substrate-binding site is contributed by 237–239 (KTG).

The protein belongs to the class-A beta-lactamase family.

The catalysed reaction is a beta-lactam + H2O = a substituted beta-amino acid. In terms of biological role, has cefotaxime-hydrolyzing activity. The sequence is that of Beta-lactamase CTX-M-4 (bla) from Salmonella typhimurium.